The following is a 213-amino-acid chain: Adenylate kinase (213 aa).

14-19 (GSGKGT) is an ATP binding site. The segment at 34-63 (SSGNLLRSAIKASTPLGIKASEYIDEGQLV) is NMP. AMP is bound by residues Ser-35, Arg-40, 61 to 63 (QLV), 89 to 92 (GFPR), and Gln-96. Positions 129–162 (SRFICPSCNFVYNQSQGFRECPTCHSELVRRSDD) are LID. An ATP-binding site is contributed by Arg-130. Residues Cys-133 and Cys-136 each contribute to the Zn(2+) site. An ATP-binding site is contributed by 139 to 140 (VY). Residues Cys-149 and Cys-152 each contribute to the Zn(2+) site. Residues Arg-159 and Arg-170 each coordinate AMP. Lys-198 lines the ATP pocket.

This sequence belongs to the adenylate kinase family. In terms of assembly, monomer.

The protein resides in the cytoplasm. The enzyme catalyses AMP + ATP = 2 ADP. Its pathway is purine metabolism; AMP biosynthesis via salvage pathway; AMP from ADP: step 1/1. In terms of biological role, catalyzes the reversible transfer of the terminal phosphate group between ATP and AMP. Plays an important role in cellular energy homeostasis and in adenine nucleotide metabolism. In Chlamydia felis (strain Fe/C-56) (Chlamydophila felis), this protein is Adenylate kinase.